The following is a 653-amino-acid chain: Bifunctional lysine-specific demethylase and histidyl-hydroxylase NO66 (653 aa).

Low complexity predominate over residues Met-1 to Ser-12. Disordered regions lie at residues Met-1–Ala-50 and Phe-65–Thr-137. The segment covering Gln-13–Thr-26 has biased composition (polar residues). The residue at position 44 (Ser-44) is a Phosphoserine. Positions Ser-72–Lys-86 are enriched in low complexity. The residue at position 131 (Ser-131) is a Phosphoserine. Phosphothreonine is present on Thr-137. Ser-138 carries the phosphoserine modification. The tract at residues Ala-184–Asp-208 is disordered. The segment covering Asn-194–Asp-208 has biased composition (basic and acidic residues). Positions Phe-300 to Val-450 constitute a JmjC domain. The Fe cation site is built by His-351, Asp-353, and His-416.

It belongs to the ROX family. NO66 subfamily. Fe(2+) is required as a cofactor.

It is found in the nucleus. The catalysed reaction is N(6),N(6)-dimethyl-L-lysyl(36)-[histone H3] + 2 2-oxoglutarate + 2 O2 = L-lysyl(36)-[histone H3] + 2 formaldehyde + 2 succinate + 2 CO2. In terms of biological role, oxygenase that can act as both a histone lysine demethylase and a ribosomal histidine hydroxylase. Specifically demethylates 'Lys-4' (H3K4me) and 'Lys-36' (H3K36me) of histone H3, thereby playing a central role in histone code. The polypeptide is Bifunctional lysine-specific demethylase and histidyl-hydroxylase NO66 (Drosophila melanogaster (Fruit fly)).